Reading from the N-terminus, the 179-residue chain is MHKDLKNVLLSEEDIQNICKEMGAIITEDYKDRPLVCVGILKGSVMFMADLIKRIDTHLSIDFMDVSSYHGGTESTGEVQILKDLGASIENKDVLIIEDILETGTTLKSITELLQSRKVNSLEIATLLDKPNRRKADIEAKYVGKKIPDEFVVGYGLDYRELYRNLPYIGTLKAEVYSK.

The diphosphate site is built by K42 and G43. E98 and D99 together coordinate Mg(2+). The active-site Proton acceptor is the E102. Residues K130, 151-152, and D158 each bind GMP; that span reads FV. R164 contributes to the diphosphate binding site.

Belongs to the purine/pyrimidine phosphoribosyltransferase family. The cofactor is Mg(2+).

Its subcellular location is the cytoplasm. The catalysed reaction is IMP + diphosphate = hypoxanthine + 5-phospho-alpha-D-ribose 1-diphosphate. It catalyses the reaction GMP + diphosphate = guanine + 5-phospho-alpha-D-ribose 1-diphosphate. Its pathway is purine metabolism; IMP biosynthesis via salvage pathway; IMP from hypoxanthine: step 1/1. It participates in purine metabolism; GMP biosynthesis via salvage pathway; GMP from guanine: step 1/1. Purine salvage pathway enzyme that catalyzes the transfer of the ribosyl-5-phosphate group from 5-phospho-alpha-D-ribose 1-diphosphate (PRPP) to the N9 position of the 6-oxopurines hypoxanthine and guanine to form the corresponding ribonucleotides IMP (inosine 5'-monophosphate) and GMP (guanosine 5'-monophosphate), with the release of PPi. The protein is Hypoxanthine-guanine phosphoribosyltransferase (hpt) of Staphylococcus epidermidis (strain ATCC 35984 / DSM 28319 / BCRC 17069 / CCUG 31568 / BM 3577 / RP62A).